The primary structure comprises 478 residues: Histidine--tRNA ligase (478 aa).

Belongs to the class-II aminoacyl-tRNA synthetase family. Homodimer.

The protein localises to the cytoplasm. The catalysed reaction is tRNA(His) + L-histidine + ATP = L-histidyl-tRNA(His) + AMP + diphosphate + H(+). The protein is Histidine--tRNA ligase (hisS) of Xanthomonas axonopodis pv. citri (strain 306).